The following is a 423-amino-acid chain: Imidazolonepropionase (423 aa).

Residues histidine 78 and histidine 80 each coordinate Fe(3+). Residues histidine 78 and histidine 80 each coordinate Zn(2+). Residues arginine 87, tyrosine 150, and histidine 183 each coordinate 4-imidazolone-5-propanoate. Residue tyrosine 150 participates in N-formimidoyl-L-glutamate binding. Position 247 (histidine 247) interacts with Fe(3+). Histidine 247 provides a ligand contact to Zn(2+). Glutamate 250 contacts 4-imidazolone-5-propanoate. Aspartate 322 provides a ligand contact to Fe(3+). Aspartate 322 is a Zn(2+) binding site. 2 residues coordinate N-formimidoyl-L-glutamate: asparagine 324 and glycine 326. Serine 327 provides a ligand contact to 4-imidazolone-5-propanoate.

It belongs to the metallo-dependent hydrolases superfamily. HutI family. Requires Zn(2+) as cofactor. Fe(3+) serves as cofactor.

It localises to the cytoplasm. It carries out the reaction 4-imidazolone-5-propanoate + H2O = N-formimidoyl-L-glutamate. Its pathway is amino-acid degradation; L-histidine degradation into L-glutamate; N-formimidoyl-L-glutamate from L-histidine: step 3/3. Catalyzes the hydrolytic cleavage of the carbon-nitrogen bond in imidazolone-5-propanoate to yield N-formimidoyl-L-glutamate. It is the third step in the universal histidine degradation pathway. In Bacillus cytotoxicus (strain DSM 22905 / CIP 110041 / 391-98 / NVH 391-98), this protein is Imidazolonepropionase.